Reading from the N-terminus, the 186-residue chain is Translation initiation factor IF-3 (186 aa).

This sequence belongs to the IF-3 family. In terms of assembly, monomer.

It is found in the cytoplasm. Its function is as follows. IF-3 binds to the 30S ribosomal subunit and shifts the equilibrium between 70S ribosomes and their 50S and 30S subunits in favor of the free subunits, thus enhancing the availability of 30S subunits on which protein synthesis initiation begins. The chain is Translation initiation factor IF-3 from Borreliella afzelii (strain PKo) (Borrelia afzelii).